The primary structure comprises 438 residues: Xylose isomerase (438 aa).

Mg(2+)-binding residues include aspartate 306 and aspartate 308.

The protein belongs to the xylose isomerase family. Homotetramer. Mg(2+) serves as cofactor.

It is found in the cytoplasm. It carries out the reaction alpha-D-xylose = alpha-D-xylulofuranose. The protein is Xylose isomerase of Caldicellulosiruptor bescii (strain ATCC BAA-1888 / DSM 6725 / KCTC 15123 / Z-1320) (Anaerocellum thermophilum).